The chain runs to 836 residues: DNA-directed RNA polymerase subunit beta' (836 aa).

Zn(2+) contacts are provided by Cys-71, Cys-73, Cys-90, and Cys-93. The Mg(2+) site is built by Asp-623, Asp-625, and Asp-627.

Belongs to the RNA polymerase beta' chain family. RpoC1 subfamily. In terms of assembly, in plastids the minimal PEP RNA polymerase catalytic core is composed of four subunits: alpha, beta, beta', and beta''. When a (nuclear-encoded) sigma factor is associated with the core the holoenzyme is formed, which can initiate transcription. It depends on Mg(2+) as a cofactor. The cofactor is Zn(2+).

It localises to the plastid. It is found in the chloroplast. The enzyme catalyses RNA(n) + a ribonucleoside 5'-triphosphate = RNA(n+1) + diphosphate. In terms of biological role, DNA-dependent RNA polymerase catalyzes the transcription of DNA into RNA using the four ribonucleoside triphosphates as substrates. In Chlorella vulgaris (Green alga), this protein is DNA-directed RNA polymerase subunit beta' (rpoC1).